The following is an 861-amino-acid chain: MQEQYRPDMIEPKVQQYWAENKVFKAIKDESKEKYYCLSMFPYPSGRLHMGHVRNYTIGDVISRYQRMLGKNVLQPFGWDAFGLPAEGAAIKNKTAPAKWTYENIAYMKKQLQLLGFGFDWDREIATCKPEYYKWEQWFFTELYKKGLVYKKTSTVNWCPNDETVLANEQVHEGCCWRCDTPVEQKEIPQWFIKITDYAEQLLGGLDALPQWPDMVKTMQRNWIGRSEGVEITFDVANTNEKVAVYTTRPDTFYGVSYLGIAAAHPLASLAAQNNSELAAFIQEAKNAKVAEADLATMEKKGMATGLFAIHPLTGEKLPIWVANFVLMHYGTGAVMAVPAHDQRDFEFAQKYSLQIKQVIEPIADEEIDLTKQAFVEHGKLVNSAEFDGKDFDGAFNGIADKLEKLGVGKRQVNYRLRDWGVSRQRYWGAPIPMLTLENGDVVPAPMEDLPIILPEDVVMDGVKNPIKADPNWAKTTLNGAPALKETDTFDTFMESSWYYARYTCPQYQNGMLDAEEANYWLPVDQYIGGIEHATMHLLYFRFFHKLLRDAGFVTSDEPADKLLCQGMVLADAFYYTSPTNERIWVSPTLVTLERDEKGRIIKATDPEGRELVHSGMTKMSKSKNNGIDPQEMVEKYGADTVRLFMMFASPAEMTLEWQESGVEGAKRFLGRVWNLVYQYQQNPAKTSLDITALSAEQKVLRREVHKTIAKVSDDIGRRQTFNTAIAAVMELMNKLTKASLDSEQDRAVMAEALSAVVRMLYPITPHICFELWQALGNESAIDTAEWVKADEAAMVEDEKLIVVQVNGKVRGKVTVAADADEDTVKTIAFADENVKKFIDNQHIVKVIYVVGKLLNVVVKP.

The 'HIGH' region signature appears at 42–52; it reads PYPSGRLHMGH. The short motif at 619–623 is the 'KMSKS' region element; sequence KMSKS. Lys-622 provides a ligand contact to ATP.

Belongs to the class-I aminoacyl-tRNA synthetase family.

It localises to the cytoplasm. It catalyses the reaction tRNA(Leu) + L-leucine + ATP = L-leucyl-tRNA(Leu) + AMP + diphosphate. The sequence is that of Leucine--tRNA ligase from Haemophilus influenzae (strain 86-028NP).